The chain runs to 669 residues: RNA-binding protein 14 (669 aa).

RRM domains are found at residues 1-73 (MKIF…MSRP) and 79-149 (WKIF…LSTK). Residues Lys126, Lys135, Lys138, Lys149, and Lys153 each participate in a glycyl lysine isopeptide (Lys-Gly) (interchain with G-Cter in SUMO2) cross-link. Disordered stretches follow at residues 147 to 175 (STKG…DTAF) and 193 to 232 (NSTG…PLTA). Position 161 is a phosphoserine (Ser161). An N6-acetyllysine; alternate modification is found at Lys164. Lys164 participates in a covalent cross-link: Glycyl lysine isopeptide (Lys-Gly) (interchain with G-Cter in SUMO2); alternate. Phosphothreonine is present on Thr206. 6 positions are modified to phosphoserine: Ser220, Ser242, Ser244, Ser256, Ser272, and Ser280. Residues 284-303 (PYRGQLASPSSQSAAASSLG) form a disordered region. A compositionally biased stretch (low complexity) spans 287–303 (GQLASPSSQSAAASSLG). The tract at residues 307–354 (GAQPSASALSSYGGQAAAASSLNSYGAQGSSLASYGNQPSSYGAQAAS) is TRBP-interacting domain; interaction with STIL. Residues Ser520, Ser523, Ser527, and Ser562 each carry the phosphoserine modification. The segment at 566-590 (VANANSTPPPYERTRLSPPRASYDD) is disordered. Thr572 carries the phosphothreonine modification. Phosphoserine is present on Ser582. Residue Lys600 forms a Glycyl lysine isopeptide (Lys-Gly) (interchain with G-Cter in SUMO2) linkage. Residues Ser618, Ser620, Ser623, Ser627, Ser643, and Ser649 each carry the phosphoserine modification.

As to quaternary structure, isoform 1: Interacts with NCOA6, CITED1 and XRCC5/KU86. Isoform 1: Interacts with SS18 isoform 1. Isoform 1: Interacts with SS18 isoform 2. Interacts with STIL and interferes with its interaction with CPAP. Interacts with gamma-tubulin. Part of the HDP-RNP complex composed of at least HEXIM1, PRKDC, XRCC5, XRCC6, paraspeckle proteins (SFPQ, NONO, PSPC1, RBM14, and MATR3) and NEAT1 RNA. Interacts with RBPMS; the interaction allows cooperative assembly of RNA-bound stable cell-specific alternative splicing regulatory complexes. In terms of tissue distribution, expressed in all tissues tested, including brain, heart, skeletal muscle, colon, thymus, spleen, kidney, liver, small intestine, placenta, lung and peripheral blood lymphocytes.

It localises to the nucleus. Its subcellular location is the nucleolus. The protein resides in the cytoplasm. Its function is as follows. Isoform 1 may function as a nuclear receptor coactivator, enhancing transcription through other coactivators such as NCOA6 and CITED1. Isoform 2, functions as a transcriptional repressor, modulating transcriptional activities of coactivators including isoform 1, NCOA6 and CITED1. Regulates centriole biogenesis by suppressing the formation of aberrant centriolar protein complexes in the cytoplasm and thus preserving mitotic spindle integrity. Prevents the formation of the STIL-CPAP complex (which can induce the formation of aberrant centriolar protein complexes) by interfering with the interaction of STIL with CPAP. Plays a role in the regulation of DNA virus-mediated innate immune response by assembling into the HDP-RNP complex, a complex that serves as a platform for IRF3 phosphorylation and subsequent innate immune response activation through the cGAS-STING pathway. Also involved in the regulation of pre-mRNA alternative splicing. This chain is RNA-binding protein 14 (RBM14), found in Homo sapiens (Human).